An 84-amino-acid chain; its full sequence is UPF0386 protein NGR_c10980 (84 aa).

This sequence belongs to the UPF0386 family.

The sequence is that of UPF0386 protein NGR_c10980 from Sinorhizobium fredii (strain NBRC 101917 / NGR234).